A 321-amino-acid chain; its full sequence is Malate dehydrogenase (321 aa).

NAD(+)-binding positions include 11-16 and aspartate 35; that span reads GSGNIG. Residues arginine 84 and arginine 90 each coordinate substrate. NAD(+) is bound by residues asparagine 97 and 120–122; that span reads ITN. Substrate-binding residues include asparagine 122 and arginine 153. Histidine 177 acts as the Proton acceptor in catalysis.

Belongs to the LDH/MDH superfamily. MDH type 3 family.

The catalysed reaction is (S)-malate + NAD(+) = oxaloacetate + NADH + H(+). Functionally, catalyzes the reversible oxidation of malate to oxaloacetate. The chain is Malate dehydrogenase from Rickettsia peacockii (strain Rustic).